The primary structure comprises 143 residues: Transcriptional regulator MraZ (143 aa).

SpoVT-AbrB domains are found at residues 5 to 47 (TYTP…PRAE) and 76 to 119 (TDEQ…DAAA).

The protein belongs to the MraZ family. As to quaternary structure, forms oligomers.

The protein localises to the cytoplasm. Its subcellular location is the nucleoid. The chain is Transcriptional regulator MraZ from Mycobacterium sp. (strain JLS).